We begin with the raw amino-acid sequence, 194 residues long: Small ribosomal subunit protein uS7 (194 aa).

This sequence belongs to the universal ribosomal protein uS7 family. Part of the 30S ribosomal subunit.

In terms of biological role, one of the primary rRNA binding proteins, it binds directly to 16S rRNA where it nucleates assembly of the head domain of the 30S subunit. Is located at the subunit interface close to the decoding center. This chain is Small ribosomal subunit protein uS7, found in Methanocorpusculum labreanum (strain ATCC 43576 / DSM 4855 / Z).